A 510-amino-acid chain; its full sequence is DNA-directed RNA polymerase I subunit RPA34 (510 aa).

At M1 the chain carries N-acetylmethionine. Residues 1-31 (MEEPQAGDAARFSCPPNFTAKPPASESPRFS) form a disordered region. S27 is modified (phosphoserine). Y80 carries the post-translational modification Phosphotyrosine. Residues 120-143 (GPQQSLSGSPLQPIPASPPPQIPP) form a disordered region. Phosphoserine is present on residues S128, S136, S172, and S205. Pro residues predominate over residues 131 to 143 (QPIPASPPPQIPP). Positions 203–510 (LGSPEMDVRK…KRKQQQQQPV (308 aa)) are disordered. The segment covering 258-270 (GKETFEPEDKTVK) has biased composition (basic and acidic residues). K270 is covalently cross-linked (Glycyl lysine isopeptide (Lys-Gly) (interchain with G-Cter in SUMO1); alternate). Residue K270 forms a Glycyl lysine isopeptide (Lys-Gly) (interchain with G-Cter in SUMO2); alternate linkage. A Phosphoserine modification is found at S285. Phosphothreonine is present on T287. Residue S309 is modified to Phosphoserine. K314 participates in a covalent cross-link: Glycyl lysine isopeptide (Lys-Gly) (interchain with G-Cter in SUMO1); alternate. K314 is covalently cross-linked (Glycyl lysine isopeptide (Lys-Gly) (interchain with G-Cter in SUMO2); alternate). Low complexity-rich tracts occupy residues 372 to 382 (AKPQAQAALAA) and 394 to 407 (DATVEPETEVVGPE). The span at 421–430 (TKKKKKKKER) shows a compositional bias: basic residues. Positions 436 to 452 (EPIQPLEPELPGEGQPE) are enriched in low complexity. Residue S490 is modified to Phosphoserine.

This sequence belongs to the eukaryotic RPA34 RNA polymerase subunit family. Component of the RNA polymerase I (Pol I) complex consisting of 13 subunits: a ten-subunit catalytic core composed of POLR1A/RPA1, POLR1B/RPA2, POLR1C/RPAC1, POLR1D/RPAC2, POLR1H/RPA12, POLR2E/RPABC1, POLR2F/RPABC2, POLR2H/RPABC3, POLR2K/RPABC4 and POLR2L/RPABC5; a mobile stalk subunit POLR1F/RPA43 protruding from the core and additional subunits homologous to general transcription factors POLR1E/RPA49 and POLR1G/RPA34. Forms a heterodimer with POLR1E/RPA49. Part of Pol I pre-initiation complex (PIC), in which Pol I core assembles with RRN3 and promoter-bound UTBF and SL1/TIF-IB complex. Interacts with TAF1A thereby associates with the SL1/TIF-IB complex. Interacts with UBTF. Interacts with POLR1E/PRAF1 through its N-terminal region. In terms of assembly, interacts with CD3E. Post-translationally, undergoes tyrosine phosphorylation upon T-cell receptor (TCR) stimulation. This phosphorylation has not been confirmed by other groups. In terms of processing, phosphorylated on tyrosine residues in initiation-competent Pol I-beta complexes but not in Pol I-alpha complexes.

The protein resides in the nucleus. It is found in the nucleolus. It localises to the chromosome. In terms of biological role, component of RNA polymerase I (Pol I), a DNA-dependent RNA polymerase which synthesizes ribosomal RNA precursors using the four ribonucleoside triphosphates as substrates. Involved in UBTF-activated transcription, presumably at a step following PIC formation. Functionally, has been described as a component of preformed T-cell receptor (TCR) complex. The protein is DNA-directed RNA polymerase I subunit RPA34 of Homo sapiens (Human).